The chain runs to 418 residues: Protease LasA (418 aa).

Positions M1–A31 are cleaved as a signal peptide. The propeptide occupies H32–L236. The Zn(2+) site is built by H259 and D272. A disulfide bond links C301 and C347. Active-site proton donor/acceptor residues include H317 and H356. H358 contacts Zn(2+). C391 and C406 are oxidised to a cystine.

The protein belongs to the peptidase M23A family. Zn(2+) is required as a cofactor. In terms of processing, processing of pro-LasA can occur extracellularly and requires elastase (lasB). Secretion and processing may be linked.

Its subcellular location is the secreted. Functionally, involved in proteolysis and elastolysis (degradation of the host protein elastin). Has staphylolytic activity (degrades pentaglycine cross-links in cell wall peptidoglycan), preferring Gly-Gly-|-X substrates where X is Ala or Gly. Enhances the elastolytic but not proteolytic activity of elastase (lasB) and elastolytic activity of other proteases. Degradation of host elastin is likely to contribute to the pathogenicity of P.aeruginosa. While either His-317 or His-356 can abstract a proton in the hydrolysis reaction, the same residue performs both functions in a given catalytic cycle, with the other stabilizing the catalytic intermediate. In Pseudomonas aeruginosa (strain ATCC 15692 / DSM 22644 / CIP 104116 / JCM 14847 / LMG 12228 / 1C / PRS 101 / PAO1), this protein is Protease LasA (lasA).